Reading from the N-terminus, the 522-residue chain is L-tyrosine/L-DOPA decarboxylase 2 (522 aa).

Tandem repeats lie at residues 75–132 (KDVH…TELE) and 135–186 (VMDW…GREH). Positions 75-186 (KDVHDDIVPG…RILDRIGREH (112 aa)) are 2 X approximate tandem repeats. Thr-163, Cys-164, Thr-258, and Asn-312 together coordinate pyridoxal 5'-phosphate. An N6-(pyridoxal phosphate)lysine modification is found at Lys-315.

Belongs to the group II decarboxylase family. Requires pyridoxal 5'-phosphate as cofactor. Strongly expressed in all tissues, particularly in thick roots.

The enzyme catalyses L-tyrosine + H(+) = tyramine + CO2. It carries out the reaction L-dopa + H(+) = dopamine + CO2. The protein operates within aromatic compound metabolism. It participates in alkaloid biosynthesis. Functionally, aromatic amino acid decarboxylase participating in the biosynthesis of natural products derived from phenylethylamine, including mescaline, a natural hallucinogen potentially used in psychotherapeutic treatments. Catalyzes the decarboxylation of L-tyrosine and L-DOPA. In Lophophora williamsii (Peyote), this protein is L-tyrosine/L-DOPA decarboxylase 2.